The following is a 1264-amino-acid chain: MTKETDKKPKERPNQRKVAFRNEAINALVNTDEDQVTFSKAMEVAKLDCQKCLLHDMHSSKSSNCRDNPFCIHRLGLEKFEKLITQEQETKEEAKKDQKRRDLNDQPAGLINGGNFCYVNSFLQVWFNVPEFRQLIYDFRPSENFVPPEAPRMNVQATMLALQDIFYTLQTTPFNETDKTSNLGKLLRLNSEQQDSQEFGLKFFNALERCLPDHPNGKETLKRLKDLFTGETCTRIVCKCGQRSEREETAISLTLNIEGYCTLLDALDAYFGEEHLDDFKCSKCNKTGDVSKQSDYVKLPPVIVIQLNRYKYTSKGRQKLKTPMAYPREIPAKAFQRTNNSIPPPAEMYDLFAVTIHEGNNAECGHYYDLIKSPLNQKWYRYNDEAIEAIPKPPGTEKPTTAKTEKSRKKDKEKYPTDQKACYGLLYRRRDAFKPLPHPKLPPEELIIDSKTEIEELFEGLTKKKIEKSEKRLYDLERRINKVKISYGKLETHSDKYKEANEVVFLPTTLLQDVLAQEYEVAKGEKKKKKKEASENEEKKKNEEDEALSAAIAASEADQRDKASSEPSTSAAATEAGDDEELRAESETPNPENAESTQVAIMETDEIMDTTPTKDIDILAKAMEDNALPTVEVPQPELKKRTRQQNGEVKYVYSQRTPRKSHNGTNGTNSSPQKQPVSSRVAALLSSHEIPTCGHGKMSIDPILYGDVKAVSRAPAIALLREYDFRVKIVYDNGENVFPENEKERDVFIFTAEDICMECVREMREEGNFNNQLEDDEKLVRRILKEEKQRCSVKCPSERPDGYLYVAKFALSNFKKSAMSARENRLAQSHNKQGTLHFDSHPMFQQKSNSGYLTLSLKRTRGKPRKSLSEIPEKMQKLDEIGSKELPDEIIADEEEISENMGSDIPTKPVESINPDALVPFEKIEFNSELRCSHGGINFNQFRLSVSPEEWAHLKVYFDECYEVKCSDDVCDQCRQMEVDAQNGSENMRGLVREMRKRISDTLKTVESRAESKEDGADIKYGICSVFIDKLRKLTSRQSTSPPSICQECLLCPHQQPFKGFLNEDNHKDSHVVGLTEEEWNTFLTEIRKLEEAGDDQSIAVDPCPIPIENGQIVDMCEKCFEQHIKFTEEQKYMFENENIYVKLVNLNVEEDIAKANGKARRGRAKNLYAIKMSSTNKLMELKVQLYDKTHQLPNDQLLYRTAGGEQFDVSNNQKTLFDLRLSPNNNDNPLILIAQQFSPSASQADETGDRAPERGFVDTALAH.

One can recognise a USP domain in the interval 108–430 (AGLINGGNFC…ACYGLLYRRR (323 aa)). The active-site Nucleophile is the Cys117. His366 functions as the Proton acceptor in the catalytic mechanism. Disordered regions lie at residues 390–415 (IPKP…KEKY), 522–610 (AKGE…IMDT), and 630–679 (TVEV…PVSS). Composition is skewed to basic and acidic residues over residues 403-415 (KTEK…KEKY) and 532-543 (EASENEEKKKNE). Positions 516-547 (AQEYEVAKGEKKKKKKEASENEEKKKNEEDEA) form a coiled coil. The span at 565-575 (SEPSTSAAATE) shows a compositional bias: low complexity. Composition is skewed to polar residues over residues 587–599 (ETPN…STQV) and 663–678 (NGTN…QPVS).

It belongs to the peptidase C19 family. As to expression, broadly expressed. Expressed in germline.

The protein resides in the nucleus. It localises to the chromosome. It carries out the reaction Thiol-dependent hydrolysis of ester, thioester, amide, peptide and isopeptide bonds formed by the C-terminal Gly of ubiquitin (a 76-residue protein attached to proteins as an intracellular targeting signal).. Recognizes and hydrolyzes the peptide bond at the C-terminal Gly of ubiquitin. Involved in the processing of poly-ubiquitin precursors as well as that of ubiquitinated proteins. Required post-developmentally to restrict the plasticity of epidermal cells, probably by regulating gene expression. The protein is Ubiquitin carboxyl-terminal hydrolase usp-48 of Caenorhabditis elegans.